A 209-amino-acid chain; its full sequence is SAGA-associated factor 11 homolog 1 (209 aa).

Positions 1-36 (MSRTIVVKNPRTSGKDEDKAQIPSQDELPSGSSGAK) are disordered. The SGF11-type zinc-finger motif lies at 120-141 (CCCPNCERMVAAVRFAPHLQTC). The segment covering 156-166 (LTVSSRSSSTS) has biased composition (low complexity). The tract at residues 156–209 (LTVSSRSSSTSTGGGQANEKSTDDEDWSLDSRPGKSTKNSRNKGSKKNQKNKLK) is disordered. Basic residues predominate over residues 193–209 (KNSRNKGSKKNQKNKLK).

Belongs to the SGF11 family. As to quaternary structure, component of some SAGA transcription coactivator-HAT complexes, at least composed of Ada2b, not/nonstop, Pcaf/Gcn5, Sgf11 and Spt3. Within the SAGA complex, Sgf11, e(y)2, and not/nonstop form an additional subcomplex of SAGA called the DUB module (deubiquitination module). Interacts directly with not/nonstop. Interacts with the AMEX complex component xmas-2. Interacts with Cbp80; important for promoter recruitment of Sgf11 that is not associated with the DUB module.

It is found in the nucleus. Its subcellular location is the nucleoplasm. The protein localises to the cytoplasm. Component of the transcription regulatory histone acetylation (HAT) complex SAGA, a multiprotein complex that activates transcription by remodeling chromatin and mediating histone acetylation and deubiquitination. Within the SAGA complex, participates in a subcomplex that specifically deubiquitinates histone H2B. The SAGA complex is recruited to specific gene promoters by activators, where it is required for transcription. Required for nuclear receptor-mediated transactivation. Binds independently on SAGA to promoters in an RNA-dependent manner. Binds to mRNA and is essential for total mRNA export from the nucleus. Required to counteract heterochromatin silencing. Controls the development of neuronal connectivity in visual system by being required for accurate axon targeting in the optic lobe. Required for expression of ecdysone-induced genes such as br/broad. In Drosophila willistoni (Fruit fly), this protein is SAGA-associated factor 11 homolog 1.